A 267-amino-acid chain; its full sequence is Nus factor SuhB (267 aa).

Mg(2+)-binding residues include glutamate 67, aspartate 84, and leucine 86. Glutamate 67 serves as a coordination point for substrate. Substrate is bound by residues 86–89 (LDGT), arginine 183, and aspartate 212.

It belongs to the inositol monophosphatase superfamily. In terms of assembly, homodimer. The rRNA transcription and antitermination complex (rrnTAC) consists of RNA polymerase (RNAP), NusA, NusB, NusE (rpsJ), NusG, SubB, ribosomal protein S4, DNA and precursor rRNA; S4 is more flexible than other subunits. Mg(2+) is required as a cofactor.

Its subcellular location is the cytoplasm. The catalysed reaction is a myo-inositol phosphate + H2O = myo-inositol + phosphate. In terms of biological role, part of the processive rRNA transcription and antitermination complex (rrnTAC). The complex forms an RNA-chaperone ring around the RNA exit tunnel of RNA polymerase (RNAP). It supports rapid transcription and antitermination of rRNA operons, cotranscriptional rRNA folding, and annealing of distal rRNA regions to allow correct ribosome biogenesis. This subunit may play a central role in organizing the structure. In Haemophilus influenzae (strain ATCC 51907 / DSM 11121 / KW20 / Rd), this protein is Nus factor SuhB (suhB).